The primary structure comprises 404 residues: Keratin, type I microfibrillar, 47.6 kDa (404 aa).

A head region spans residues 1 to 56; the sequence is MSFNFCLPNLSFRSSCSSRPCVPSSCCGTTLPGACNIPASVGSCNWFCEGSFNGNE. The IF rod domain maps to 56 to 367; that stretch reads EKETMQFLND…GLLDSEDCKL (312 aa). The segment at 57–91 is coil 1A; the sequence is KETMQFLNDRLASYLEKVRQLERENAELERRILER. The segment at 92–102 is linker 1; that stretch reads SQQQEPLVCPN. Residues 103–203 are coil 1B; that stretch reads YQSYFRTIEE…HEQEVNTLRS (101 aa). The segment at 204–219 is linker 12; the sequence is QLGDRLNVEVDAAPTV. The interval 220 to 363 is coil 2; that stretch reads DLNHVLNETR…NTYRGLLDSE (144 aa). A tail region spans residues 364–404; the sequence is DCKLPCNPCATTNTCGKPIGPCISNPCVSRTRCGPCNTFVH.

Belongs to the intermediate filament family.

Functionally, wool microfibrillar keratin. This Ovis aries (Sheep) protein is Keratin, type I microfibrillar, 47.6 kDa.